The primary structure comprises 369 residues: Glycerol-3-phosphate dehydrogenase [NAD(P)+] (369 aa).

Residues Ser-6, Trp-7, Arg-27, Arg-28, and Lys-101 each coordinate NADPH. Positions 101 and 131 each coordinate sn-glycerol 3-phosphate. Ala-135 is a binding site for NADPH. 5 residues coordinate sn-glycerol 3-phosphate: Lys-186, Asp-239, Ser-249, Arg-250, and Asn-251. The active-site Proton acceptor is Lys-186. Arg-250 serves as a coordination point for NADPH. Glu-276 serves as a coordination point for NADPH. The tract at residues 312–369 is disordered; it reads KDIAPHLTTDDEPQGERTRGERTTDDGQGQGRTSVWGSLKRAFDQLRDGGGSSRRDRP. Basic and acidic residues-rich tracts occupy residues 325 to 336 and 352 to 369; these read QGERTRGERTTD and RAFDQLRDGGGSSRRDRP.

It belongs to the NAD-dependent glycerol-3-phosphate dehydrogenase family.

It is found in the cytoplasm. It carries out the reaction sn-glycerol 3-phosphate + NAD(+) = dihydroxyacetone phosphate + NADH + H(+). It catalyses the reaction sn-glycerol 3-phosphate + NADP(+) = dihydroxyacetone phosphate + NADPH + H(+). It functions in the pathway membrane lipid metabolism; glycerophospholipid metabolism. In terms of biological role, catalyzes the reduction of the glycolytic intermediate dihydroxyacetone phosphate (DHAP) to sn-glycerol 3-phosphate (G3P), the key precursor for phospholipid synthesis. This Leifsonia xyli subsp. xyli (strain CTCB07) protein is Glycerol-3-phosphate dehydrogenase [NAD(P)+].